Consider the following 314-residue polypeptide: Putative S-adenosyl-L-methionine-dependent methyltransferase MUL_4402 (314 aa).

S-adenosyl-L-methionine contacts are provided by residues D132 and 161 to 162; that span reads DL. Residues 291–314 form a disordered region; that stretch reads RPVPDDAEGPVPPTLFVSAHRPAA.

The protein belongs to the UPF0677 family.

In terms of biological role, exhibits S-adenosyl-L-methionine-dependent methyltransferase activity. This Mycobacterium ulcerans (strain Agy99) protein is Putative S-adenosyl-L-methionine-dependent methyltransferase MUL_4402.